The primary structure comprises 96 residues: ATP-dependent Clp protease adapter protein ClpS (96 aa).

It belongs to the ClpS family. As to quaternary structure, binds to the N-terminal domain of the chaperone ClpA.

Functionally, involved in the modulation of the specificity of the ClpAP-mediated ATP-dependent protein degradation. The sequence is that of ATP-dependent Clp protease adapter protein ClpS from Campylobacter jejuni subsp. doylei (strain ATCC BAA-1458 / RM4099 / 269.97).